The chain runs to 224 residues: Orotate phosphoribosyltransferase (224 aa).

Lys-29 is a 5-phospho-alpha-D-ribose 1-diphosphate binding site. Position 37 to 38 (37 to 38 (FF)) interacts with orotate. 5-phospho-alpha-D-ribose 1-diphosphate contacts are provided by residues 75–76 (YK), Arg-105, Lys-106, Lys-109, His-111, and 130–138 (DDVITAGTS). Thr-134 and Arg-162 together coordinate orotate.

This sequence belongs to the purine/pyrimidine phosphoribosyltransferase family. PyrE subfamily. In terms of assembly, homodimer. Requires Mg(2+) as cofactor.

The enzyme catalyses orotidine 5'-phosphate + diphosphate = orotate + 5-phospho-alpha-D-ribose 1-diphosphate. It participates in pyrimidine metabolism; UMP biosynthesis via de novo pathway; UMP from orotate: step 1/2. Functionally, catalyzes the transfer of a ribosyl phosphate group from 5-phosphoribose 1-diphosphate to orotate, leading to the formation of orotidine monophosphate (OMP). In Bordetella bronchiseptica (strain ATCC BAA-588 / NCTC 13252 / RB50) (Alcaligenes bronchisepticus), this protein is Orotate phosphoribosyltransferase.